Consider the following 462-residue polypeptide: UDP-N-acetylmuramate--L-alanine ligase (462 aa).

An ATP-binding site is contributed by 119-125 (GTHGKTT).

It belongs to the MurCDEF family.

The protein localises to the cytoplasm. The catalysed reaction is UDP-N-acetyl-alpha-D-muramate + L-alanine + ATP = UDP-N-acetyl-alpha-D-muramoyl-L-alanine + ADP + phosphate + H(+). It functions in the pathway cell wall biogenesis; peptidoglycan biosynthesis. Its function is as follows. Cell wall formation. The sequence is that of UDP-N-acetylmuramate--L-alanine ligase from Parabacteroides distasonis (strain ATCC 8503 / DSM 20701 / CIP 104284 / JCM 5825 / NCTC 11152).